An 80-amino-acid chain; its full sequence is Bacteriochlorophyll c-binding protein (80 aa).

His25 contributes to the a bacteriochlorophyll c binding site. The segment at 49 to 80 is disordered; the sequence is PGVSRSGSGEGAFSSSPSNGFRPKRIRSRFNR. The propeptide occupies 54 to 80; sequence SGSGEGAFSSSPSNGFRPKRIRSRFNR. Residues 70 to 80 show a composition bias toward basic residues; that stretch reads RPKRIRSRFNR.

The protein belongs to the BChl C/E-binding protein family.

It is found in the chlorosome. Its subcellular location is the chlorosome envelope. Component of the photosynthetic apparatus. The light harvesting B740 complex binds bacteriochlorophyll c. The polypeptide is Bacteriochlorophyll c-binding protein (cmsA) (Chloroflexus aurantiacus (strain ATCC 29366 / DSM 635 / J-10-fl)).